Reading from the N-terminus, the 1316-residue chain is DNA-directed RNA polymerase subunit beta' (1316 aa).

4 residues coordinate Zn(2+): cysteine 60, cysteine 62, cysteine 75, and cysteine 78. Residues aspartate 535, aspartate 537, and aspartate 539 each contribute to the Mg(2+) site. Residues cysteine 891, cysteine 968, cysteine 975, and cysteine 978 each contribute to the Zn(2+) site.

Belongs to the RNA polymerase beta' chain family. As to quaternary structure, the RNAP catalytic core consists of 2 alpha, 1 beta, 1 beta' and 1 omega subunit. When a sigma factor is associated with the core the holoenzyme is formed, which can initiate transcription. The cofactor is Mg(2+). Zn(2+) is required as a cofactor.

It carries out the reaction RNA(n) + a ribonucleoside 5'-triphosphate = RNA(n+1) + diphosphate. Functionally, DNA-dependent RNA polymerase catalyzes the transcription of DNA into RNA using the four ribonucleoside triphosphates as substrates. The protein is DNA-directed RNA polymerase subunit beta' of Mycobacterium ulcerans (strain Agy99).